A 324-amino-acid chain; its full sequence is tRNA pseudouridine synthase B (324 aa).

The Nucleophile role is filled by D49. The interval 87–107 (RSTDDLEGQPTKTSDKRPSRE) is disordered.

The protein belongs to the pseudouridine synthase TruB family. Type 1 subfamily.

It carries out the reaction uridine(55) in tRNA = pseudouridine(55) in tRNA. In terms of biological role, responsible for synthesis of pseudouridine from uracil-55 in the psi GC loop of transfer RNAs. The protein is tRNA pseudouridine synthase B of Brucella abortus (strain 2308).